Here is a 376-residue protein sequence, read N- to C-terminus: Cobalt-precorrin-5B C(1)-methyltransferase (376 aa).

This sequence belongs to the CbiD family.

It catalyses the reaction Co-precorrin-5B + S-adenosyl-L-methionine = Co-precorrin-6A + S-adenosyl-L-homocysteine. It functions in the pathway cofactor biosynthesis; adenosylcobalamin biosynthesis; cob(II)yrinate a,c-diamide from sirohydrochlorin (anaerobic route): step 6/10. In terms of biological role, catalyzes the methylation of C-1 in cobalt-precorrin-5B to form cobalt-precorrin-6A. This chain is Cobalt-precorrin-5B C(1)-methyltransferase, found in Bradyrhizobium sp. (strain BTAi1 / ATCC BAA-1182).